The following is a 430-amino-acid chain: Histidine--tRNA ligase (430 aa).

It belongs to the class-II aminoacyl-tRNA synthetase family. In terms of assembly, homodimer.

It localises to the cytoplasm. The enzyme catalyses tRNA(His) + L-histidine + ATP = L-histidyl-tRNA(His) + AMP + diphosphate + H(+). This chain is Histidine--tRNA ligase, found in Chlorobaculum parvum (strain DSM 263 / NCIMB 8327) (Chlorobium vibrioforme subsp. thiosulfatophilum).